The chain runs to 282 residues: Transcription repressor MYB4 (282 aa).

2 consecutive HTH myb-type domains span residues 9–61 (KAHT…INYL) and 62–116 (RPDL…RRKL). 2 DNA-binding regions (H-T-H motif) span residues 37 to 61 (WRSL…INYL) and 89 to 112 (WSLI…NTHI). The segment at 119-145 (RGIDPTSHRPIQESSASQDSKPTQLEP) is disordered. Over residues 130-145 (QESSASQDSKPTQLEP) the composition is skewed to polar residues.

As to quaternary structure, interacts with BHLH12/MYC1 and BHLH42/TT8. Interacts with SAD2. In terms of tissue distribution, widely expressed at low level. Highly expressed in siliques. Weakly expressed in seedlings, young and mature leaves, cauline leaves, stems, flower buds and roots.

It is found in the nucleus. Transcription repressor involved in regulation of protection against UV. Mediates transcriptional repression of CYP73A5, the gene encoding trans-cinnamate 4-monooxygenase, thereby regulating the accumulation of the UV-protectant compound sinapoylmalate. In Arabidopsis thaliana (Mouse-ear cress), this protein is Transcription repressor MYB4 (MYB4).